A 485-amino-acid polypeptide reads, in one-letter code: Anthranilate synthase component I-like protein (485 aa).

L-tryptophan-binding positions include Ser-69 and 271–273 (PFA). 306–307 (GT) provides a ligand contact to chorismate. Position 333 (Glu-333) interacts with Mg(2+). Chorismate-binding positions include Arg-441, 455–457 (GAG), and Gly-457. Glu-470 is a Mg(2+) binding site.

This sequence belongs to the anthranilate synthase component I family. In terms of assembly, tetramer of two components I and two components II. Mg(2+) is required as a cofactor.

It carries out the reaction chorismate + L-glutamine = anthranilate + pyruvate + L-glutamate + H(+). It participates in amino-acid biosynthesis; L-tryptophan biosynthesis; L-tryptophan from chorismate: step 1/5. The polypeptide is Anthranilate synthase component I-like protein (trpE2) (Synechocystis sp. (strain ATCC 27184 / PCC 6803 / Kazusa)).